Consider the following 982-residue polypeptide: Presequence protease, mitochondrial (982 aa).

The transit peptide at 1 to 7 (MFQIRNY) directs the protein to the mitochondrion. Residue H84 participates in Zn(2+) binding. The active-site Proton acceptor is E87. Residue H88 participates in Zn(2+) binding. The active site involves E160. Residue E185 participates in Zn(2+) binding.

The protein belongs to the peptidase M16 family. PreP subfamily. As to quaternary structure, monomer and homodimer; homodimerization is induced by binding of the substrate. Zn(2+) serves as cofactor.

It localises to the mitochondrion intermembrane space. Its subcellular location is the mitochondrion matrix. Degrades mitochondrial transit peptides after their cleavage in the intermembrane space or in the matrix, and presequence peptides; clearance of these peptides is required to keep the presequence processing machinery running. Preferentially cleaves the N-terminal side of paired basic amino acid residues. Also degrades other unstructured peptides. May function as an ATP-dependent peptidase as opposed to a metalloendopeptidase. The sequence is that of Presequence protease, mitochondrial (CYM1) from Kluyveromyces lactis (strain ATCC 8585 / CBS 2359 / DSM 70799 / NBRC 1267 / NRRL Y-1140 / WM37) (Yeast).